Reading from the N-terminus, the 345-residue chain is Uroporphyrinogen decarboxylase (345 aa).

Residues R28 to R32, D77, Y152, S207, and H321 contribute to the substrate site.

It belongs to the uroporphyrinogen decarboxylase family. As to quaternary structure, homodimer.

It is found in the cytoplasm. The catalysed reaction is uroporphyrinogen III + 4 H(+) = coproporphyrinogen III + 4 CO2. It participates in porphyrin-containing compound metabolism; protoporphyrin-IX biosynthesis; coproporphyrinogen-III from 5-aminolevulinate: step 4/4. In terms of biological role, catalyzes the decarboxylation of four acetate groups of uroporphyrinogen-III to yield coproporphyrinogen-III. The chain is Uroporphyrinogen decarboxylase from Arthrobacter sp. (strain FB24).